The following is a 784-amino-acid chain: Armadillo repeat-containing X-linked protein 2 (784 aa).

Residues 1 to 6 (MSRARD) lie on the Mitochondrial intermembrane side of the membrane. Mitochondrion outer membrane (MOM)-targeting sequence regions lie at residues 1–6 (MSRARD) and 26–40 (KYTRGKDQKKKRLTK). Residues 7–27 (AGCVAAGIVIGASAWYCVYKY) form a helical; Signal-anchor membrane-spanning segment. Topologically, residues 28–784 (TRGKDQKKKR…VKVIKLVNKF (757 aa)) are cytoplasmic. Disordered stretches follow at residues 328-353 (TSGGAAVPSGGAATPRAAASTQRTAS), 388-461 (HSGA…ELGM), and 488-522 (PESEEGESGWTDTESDSDSEPDVPQRGKGKRTIPM). The segment covering 396-418 (GTSGSSKTAATGKKAAPGAHTGA) has biased composition (low complexity). The span at 488 to 508 (PESEEGESGWTDTESDSDSEP) shows a compositional bias: acidic residues. 3 ARM repeats span residues 528-568 (PYEI…NNAN), 570-609 (SCNQETIRKLGGLPIIANMINKTDPHIKEKALMAMNNLSE), and 650-689 (ITNDYQHLLVNSIANFFRLLSQGGGKIKVEILKILSNFAE).

This sequence belongs to the eutherian X-chromosome-specific Armcx family. Widely expressed in the adult nervous tissue, especially in the forebrain, including the cerebral cortex, hippocampus and thalamus.

The protein localises to the mitochondrion. It localises to the mitochondrion outer membrane. Functionally, may regulate the dynamics and distribution of mitochondria in neural cells. The protein is Armadillo repeat-containing X-linked protein 2 (Armcx2) of Mus musculus (Mouse).